Here is a 279-residue protein sequence, read N- to C-terminus: Tryptophan synthase alpha chain (279 aa).

Catalysis depends on proton acceptor residues E50 and D61.

The protein belongs to the TrpA family. Tetramer of two alpha and two beta chains.

It carries out the reaction (1S,2R)-1-C-(indol-3-yl)glycerol 3-phosphate + L-serine = D-glyceraldehyde 3-phosphate + L-tryptophan + H2O. The protein operates within amino-acid biosynthesis; L-tryptophan biosynthesis; L-tryptophan from chorismate: step 5/5. Functionally, the alpha subunit is responsible for the aldol cleavage of indoleglycerol phosphate to indole and glyceraldehyde 3-phosphate. This is Tryptophan synthase alpha chain from Brucella suis (strain ATCC 23445 / NCTC 10510).